The primary structure comprises 63 residues: Large ribosomal subunit protein uL29 (63 aa).

It belongs to the universal ribosomal protein uL29 family.

The protein is Large ribosomal subunit protein uL29 of Shigella dysenteriae serotype 1 (strain Sd197).